We begin with the raw amino-acid sequence, 767 residues long: 5-methyltetrahydropteroyltriglutamate--homocysteine methyltransferase (767 aa).

Residues K19 and N126 each coordinate 5-methyltetrahydropteroyltri-L-glutamate. L-homocysteine is bound by residues 446-448 and E499; that span reads IGS. L-methionine is bound by residues 446–448 and E499; that span reads IGS. 5-methyltetrahydropteroyltri-L-glutamate contacts are provided by residues D504, Y527, 530–531, and W576; that span reads RY. Position 614 (D614) interacts with L-homocysteine. D614 is a binding site for L-methionine. H657, C659, and E679 together coordinate Zn(2+). The active-site Proton donor is H707. C739 serves as a coordination point for Zn(2+).

The protein belongs to the vitamin-B12 independent methionine synthase family. Zn(2+) serves as cofactor.

The catalysed reaction is 5-methyltetrahydropteroyltri-L-glutamate + L-homocysteine = tetrahydropteroyltri-L-glutamate + L-methionine. It functions in the pathway amino-acid biosynthesis; L-methionine biosynthesis via de novo pathway; L-methionine from L-homocysteine (MetE route): step 1/1. Its activity is regulated as follows. Inhibited weakly by methotrexate. Its function is as follows. Catalyzes the transfer of a methyl group from 5-methyltetrahydrofolate to homocysteine resulting in methionine formation. The sequence is that of 5-methyltetrahydropteroyltriglutamate--homocysteine methyltransferase from Candida albicans (strain SC5314 / ATCC MYA-2876) (Yeast).